We begin with the raw amino-acid sequence, 604 residues long: Netrin-1 (604 aa).

The N-terminal stretch at 1–24 is a signal peptide; sequence MMRAVWEALAALAAVACLVGAVRG. The Laminin N-terminal domain occupies 47 to 284; that stretch reads HPRRCIPDFV…AVSDLQVGGR (238 aa). 3 N-linked (GlcNAc...) asparagine glycosylation sites follow: Asn95, Asn116, and Asn131. Intrachain disulfides connect Cys119–Cys152, Cys285–Cys294, Cys287–Cys304, Cys306–Cys315, Cys318–Cys338, Cys341–Cys350, Cys343–Cys368, Cys371–Cys380, Cys383–Cys401, Cys404–Cys416, Cys406–Cys423, Cys425–Cys434, Cys437–Cys451, Cys472–Cys544, and Cys491–Cys601. 3 Laminin EGF-like domains span residues 285–340, 341–403, and 404–453; these read CKCN…ECVA, CNCN…ACKA, and CDCH…PCIK. A glycan (N-linked (GlcNAc...) asparagine) is linked at Asn417. One can recognise an NTR domain in the interval 472-601; the sequence is CDSYCKASKG…FQQREKKGKC (130 aa). A Cell attachment site motif is present at residues 530–532; it reads RGD.

As to quaternary structure, binds to its receptors; DCC, UNC5A, UNC5B, UNC5C and probably UNC5D. Binds to its receptor; DSCAM. Interacts with APP. In terms of tissue distribution, in the embryo, widely expressed in the developing nervous system and in mesodermal tissues.

It is found in the secreted. Its subcellular location is the cytoplasm. Functionally, netrins control guidance of CNS commissural axons and peripheral motor axons. Its association with either DCC or some UNC5 receptors will lead to axon attraction or repulsion, respectively. Binding to UNC5C might cause dissociation of UNC5C from polymerized TUBB3 in microtubules and thereby lead to increased microtubule dynamics and axon repulsion. Involved in dorsal root ganglion axon projection towards the spinal cord. It also serves as a survival factor via its association with its receptors which prevent the initiation of apoptosis. Involved in colorectal tumorigenesis by regulating apoptosis. The protein is Netrin-1 (Ntn1) of Mus musculus (Mouse).